Reading from the N-terminus, the 425-residue chain is Trigger factor (425 aa).

Residues 163–248 enclose the PPIase FKBP-type domain; the sequence is GDTAVIDFEG…VHEIKTKELP (86 aa).

This sequence belongs to the FKBP-type PPIase family. Tig subfamily.

It is found in the cytoplasm. The catalysed reaction is [protein]-peptidylproline (omega=180) = [protein]-peptidylproline (omega=0). Its function is as follows. Involved in protein export. Acts as a chaperone by maintaining the newly synthesized protein in an open conformation. Functions as a peptidyl-prolyl cis-trans isomerase. The protein is Trigger factor of Bacillus cereus (strain Q1).